A 615-amino-acid chain; its full sequence is MYTKLSLFPRKSSSLLSIANEKRIHQFLRNLCTAVERLDFGNSNDSSEMNPREGYNGRIQNRTGSSGEVSESIHTQSQSLGSNQGRNEQSWKQSPSLSNSQVQSQYQGNWYGTNSDYQNGVGSSWHSGKTIDREVYDMIMEFDEYCIQENVRVALTTMEKLEKKGYVMDFVRLLKLTQLCREGNVYYEVSVLEEAKVSVLAKIRALVNNLEANYLKYYTDIMIEEYDAFCKHGKVKKALYTIDILASMNYVVDLSRLLRLAKICGEAEGLQEAKTVHGKISASVSHLDLSSNHVLLEMYSNCGLANEAASVFEKMSEKNLETWCIIIRCFAKNGFGEDAIDMFSRFKEEGNIPDGQLFRGIFYACGMLGDVDEGLLHFESMSRDYGIAPSIEDYVSLVEMYALPGFLDEALEFVERMPMEPNVDVWETLMNLSRVHGNLELGDYCAEVVEFLDPTRLNKQSREGFIPVKASDVEKESLKKRSGILHGVKSSMQEFRAGDTNLPENDELFQLLRNLKMHMVEVGYVAETRMALHDIDQESKETLLLGHSERIAFARAVLNSAPRKPFTVIKNLRVCVDCHNALKIMSDIVGREVITRDIKRFHQMKNGACTCKDYW.

The disordered stretch occupies residues 40–98 (FGNSNDSSEMNPREGYNGRIQNRTGSSGEVSESIHTQSQSLGSNQGRNEQSWKQSPSLS). A compositionally biased stretch (polar residues) spans 58–98 (RIQNRTGSSGEVSESIHTQSQSLGSNQGRNEQSWKQSPSLS). PPR repeat units lie at residues 288-318 (DLSS…MSEK), 319-353 (NLET…GNIP), 354-389 (DGQL…GIAP), and 390-420 (SIED…MPME). Residues 490 to 520 (SSMQEFRAGDTNLPENDELFQLLRNLKMHMV) form a type E(+) motif region. The segment at 521–615 (EVGYVAETRM…NGACTCKDYW (95 aa)) is type DYW motif.

Belongs to the PPR family. PCMP-H subfamily.

In Arabidopsis thaliana (Mouse-ear cress), this protein is Pentatricopeptide repeat-containing protein At2g25580 (PCMP-H75).